Reading from the N-terminus, the 240-residue chain is UDP-2,3-diacylglucosamine hydrolase (240 aa).

Residues Asp-8, His-10, Asp-41, Asn-79, and His-114 each coordinate Mn(2+). 79 to 80 (NR) contributes to the substrate binding site. Residues Asp-122, Ser-160, Asn-164, Lys-167, and His-195 each contribute to the substrate site. His-195 and His-197 together coordinate Mn(2+).

It belongs to the LpxH family. Requires Mn(2+) as cofactor.

It localises to the cell inner membrane. It carries out the reaction UDP-2-N,3-O-bis[(3R)-3-hydroxytetradecanoyl]-alpha-D-glucosamine + H2O = 2-N,3-O-bis[(3R)-3-hydroxytetradecanoyl]-alpha-D-glucosaminyl 1-phosphate + UMP + 2 H(+). It functions in the pathway glycolipid biosynthesis; lipid IV(A) biosynthesis; lipid IV(A) from (3R)-3-hydroxytetradecanoyl-[acyl-carrier-protein] and UDP-N-acetyl-alpha-D-glucosamine: step 4/6. Its function is as follows. Hydrolyzes the pyrophosphate bond of UDP-2,3-diacylglucosamine to yield 2,3-diacylglucosamine 1-phosphate (lipid X) and UMP by catalyzing the attack of water at the alpha-P atom. Involved in the biosynthesis of lipid A, a phosphorylated glycolipid that anchors the lipopolysaccharide to the outer membrane of the cell. This Cellvibrio japonicus (strain Ueda107) (Pseudomonas fluorescens subsp. cellulosa) protein is UDP-2,3-diacylglucosamine hydrolase.